A 247-amino-acid chain; its full sequence is Carboxy-S-adenosyl-L-methionine synthase (247 aa).

S-adenosyl-L-methionine contacts are provided by residues tyrosine 40, 65-67, 90-91, 122-123, asparagine 137, and arginine 204; these read GSS, DN, and DI.

This sequence belongs to the class I-like SAM-binding methyltransferase superfamily. Cx-SAM synthase family. As to quaternary structure, homodimer.

It carries out the reaction prephenate + S-adenosyl-L-methionine = carboxy-S-adenosyl-L-methionine + 3-phenylpyruvate + H2O. Its function is as follows. Catalyzes the conversion of S-adenosyl-L-methionine (SAM) to carboxy-S-adenosyl-L-methionine (Cx-SAM). The polypeptide is Carboxy-S-adenosyl-L-methionine synthase (Pseudomonas syringae pv. syringae (strain B728a)).